The chain runs to 239 residues: Purine nucleoside phosphorylase DeoD-type (239 aa).

H5 is an a purine D-ribonucleoside binding site. Phosphate contacts are provided by residues G21, R25, R44, and 88-91 (RVGS). A purine D-ribonucleoside contacts are provided by residues 180 to 182 (EME) and 204 to 205 (SD). Residue D205 is the Proton donor of the active site.

It belongs to the PNP/UDP phosphorylase family. In terms of assembly, homohexamer; trimer of homodimers.

It catalyses the reaction a purine D-ribonucleoside + phosphate = a purine nucleobase + alpha-D-ribose 1-phosphate. The enzyme catalyses a purine 2'-deoxy-D-ribonucleoside + phosphate = a purine nucleobase + 2-deoxy-alpha-D-ribose 1-phosphate. Catalyzes the reversible phosphorolytic breakdown of the N-glycosidic bond in the beta-(deoxy)ribonucleoside molecules, with the formation of the corresponding free purine bases and pentose-1-phosphate. In Citrobacter koseri (strain ATCC BAA-895 / CDC 4225-83 / SGSC4696), this protein is Purine nucleoside phosphorylase DeoD-type.